The following is a 264-amino-acid chain: MEHTTTHNNDPLVLGGRALESRLFIGTGKYGSDSLIPRVAEASGAQVITVALRRVDMQAAAGNVMQHIPQHMQLLPNTSGARTAEEAVRIARLARAAGCGDWIKIEVISDSRYLLPDGYETAKATEILARDGFVVLPYMNPDLYVARDLVSAGAAAVMPLGAPIGTNRGLRTQEMIGILIEEIELPVIVDAGIGRPSQACEAMEMGAAACLVNTAIASAGDPVLMASAFGAAVRAGRRAWLAGTGAVLEGQAQASSPLLGFLDS.

The Schiff-base intermediate with DXP role is filled by Lys-104. Residues Gly-165, Ala-191–Gly-192, and Asn-213–Thr-214 each bind 1-deoxy-D-xylulose 5-phosphate.

It belongs to the ThiG family. Homotetramer. Forms heterodimers with either ThiH or ThiS.

The protein localises to the cytoplasm. The catalysed reaction is [ThiS sulfur-carrier protein]-C-terminal-Gly-aminoethanethioate + 2-iminoacetate + 1-deoxy-D-xylulose 5-phosphate = [ThiS sulfur-carrier protein]-C-terminal Gly-Gly + 2-[(2R,5Z)-2-carboxy-4-methylthiazol-5(2H)-ylidene]ethyl phosphate + 2 H2O + H(+). Its pathway is cofactor biosynthesis; thiamine diphosphate biosynthesis. Its function is as follows. Catalyzes the rearrangement of 1-deoxy-D-xylulose 5-phosphate (DXP) to produce the thiazole phosphate moiety of thiamine. Sulfur is provided by the thiocarboxylate moiety of the carrier protein ThiS. In vitro, sulfur can be provided by H(2)S. This chain is Thiazole synthase, found in Oleidesulfovibrio alaskensis (strain ATCC BAA-1058 / DSM 17464 / G20) (Desulfovibrio alaskensis).